Here is a 446-residue protein sequence, read N- to C-terminus: MNVTPEVKSRGMKFAEEQLLKHGWTQGKGLGRKENGITQALRVTLKQDTHGVGHDPAKEFTNHWWNELFNKTAANLVVETGQDGVQIRSLSKETTRYNHPKPNLLYQKFVKMATLTSGGEKPNKDLESCSDDDNQGSKSPKILTDEMLLQACEGRTAHKAARLGITMKAKLARLEAQEQAFLARLKGQDPGAPQLQSESKPPKKKKKKRRQKEEEEATASERNDADEKHPEHAEQNIRKSKKKKRRHQEGKVSDEREGTTKGNEKEDAAGTSGLGELNSREQTNQSLRKGKKKKRWHHEEEKMGVLEEGGKGKEAAGSVRTEEVESRAYADPCSRRKKRQQQEEEDLNLEDRGEETVLGGGTREAESRACSDGRSRKSKKKRQQHQEEEDILDVRDEKDGGAREAESRAHTGSSSRGKRKRQQHPKKERAGVSTVQKAKKKQKKRD.

An N-acetylmethionine modification is found at methionine 1. At threonine 4 the chain carries Phosphothreonine. The 47-residue stretch at 11-57 (GMKFAEEQLLKHGWTQGKGLGRKENGITQALRVTLKQDTHGVGHDPA) folds into the G-patch domain. Residue lysine 46 forms a Glycyl lysine isopeptide (Lys-Gly) (interchain with G-Cter in SUMO2) linkage. At threonine 116 the chain carries Phosphothreonine. Disordered stretches follow at residues 116–140 (TSGGEKPNKDLESCSDDDNQGSKSP) and 188–446 (QDPG…KKRD). Serine 128, serine 130, and serine 139 each carry phosphoserine. The stretch at 166 to 251 (TMKAKLARLE…KKKRRHQEGK (86 aa)) forms a coiled coil. The span at 219–237 (ASERNDADEKHPEHAEQNI) shows a compositional bias: basic and acidic residues. The segment covering 238–248 (RKSKKKKRRHQ) has biased composition (basic residues). Basic and acidic residues-rich tracts occupy residues 249–268 (EGKVSDEREGTTKGNEKEDA), 297–328 (HHEEEKMGVLEEGGKGKEAAGSVRTEEVESRA), 363–375 (REAESRACSDGRS), and 392–409 (LDVRDEKDGGAREAESRA). 2 stretches are compositionally biased toward basic residues: residues 416-427 (RGKRKRQQHPKK) and 437-446 (KAKKKQKKRD).

This Homo sapiens (Human) protein is G patch domain-containing protein 4 (GPATCH4).